Here is a 375-residue protein sequence, read N- to C-terminus: Queuine tRNA-ribosyltransferase (375 aa).

The Proton acceptor role is filled by Asp89. Substrate-binding positions include 89–93 (DSGGF), Asp143, Gln187, and Gly214. Residues 245 to 251 (GVGKPED) are RNA binding. Asp264 acts as the Nucleophile in catalysis. An RNA binding; important for wobble base 34 recognition region spans residues 269–273 (TRNAR). Residues Cys302, Cys304, Cys307, and His333 each contribute to the Zn(2+) site.

Belongs to the queuine tRNA-ribosyltransferase family. As to quaternary structure, homodimer. Within each dimer, one monomer is responsible for RNA recognition and catalysis, while the other monomer binds to the replacement base PreQ1. Zn(2+) serves as cofactor.

It carries out the reaction 7-aminomethyl-7-carbaguanine + guanosine(34) in tRNA = 7-aminomethyl-7-carbaguanosine(34) in tRNA + guanine. Its pathway is tRNA modification; tRNA-queuosine biosynthesis. Catalyzes the base-exchange of a guanine (G) residue with the queuine precursor 7-aminomethyl-7-deazaguanine (PreQ1) at position 34 (anticodon wobble position) in tRNAs with GU(N) anticodons (tRNA-Asp, -Asn, -His and -Tyr). Catalysis occurs through a double-displacement mechanism. The nucleophile active site attacks the C1' of nucleotide 34 to detach the guanine base from the RNA, forming a covalent enzyme-RNA intermediate. The proton acceptor active site deprotonates the incoming PreQ1, allowing a nucleophilic attack on the C1' of the ribose to form the product. After dissociation, two additional enzymatic reactions on the tRNA convert PreQ1 to queuine (Q), resulting in the hypermodified nucleoside queuosine (7-(((4,5-cis-dihydroxy-2-cyclopenten-1-yl)amino)methyl)-7-deazaguanosine). This Citrobacter koseri (strain ATCC BAA-895 / CDC 4225-83 / SGSC4696) protein is Queuine tRNA-ribosyltransferase.